Consider the following 335-residue polypeptide: Endo-1,4-beta-xylanase S20 (335 aa).

The N-terminal stretch at 1-22 is a signal peptide; it reads MLRKLVTGALAAALLLSGQSNA. In terms of domain architecture, GH11 spans 39–241; the sequence is NNKNETGNGN…GSGYVDFTYA (203 aa). 2 N-linked (GlcNAc...) asparagine glycosylation sites follow: Asn-42 and Asn-78. Glu-134 functions as the Nucleophile in the catalytic mechanism. The N-linked (GlcNAc...) asparagine glycan is linked to Asn-202. Glu-228 (proton donor) is an active-site residue. Asn-251 carries an N-linked (GlcNAc...) asparagine glycan. Residues 251–291 form a disordered region; the sequence is NASAPSNNNNNNNNNNDNNGNWNNWNNNNNNNNNNNNNNNN. Low complexity predominate over residues 257–291; that stretch reads NNNNNNNNNNDNNGNWNNWNNNNNNNNNNNNNNNN. The CBM1 domain occupies 300–335; that stretch reads NCAAIWGQCGGSGYNGPKCCKQGSCKQINQWYSQCQ.

This sequence belongs to the glycosyl hydrolase 11 (cellulase G) family.

The protein resides in the secreted. It carries out the reaction Endohydrolysis of (1-&gt;4)-beta-D-xylosidic linkages in xylans.. Its pathway is glycan degradation; xylan degradation. Its function is as follows. Endo-1,4-beta-xylanase involved in the hydrolysis of xylan, a major structural heterogeneous polysaccharide found in plant biomass representing the second most abundant polysaccharide in the biosphere, after cellulose. The protein is Endo-1,4-beta-xylanase S20 (xynS20) of Neocallimastix patriciarum (Rumen fungus).